The sequence spans 1150 residues: Fl(2)d-associated complex component (1150 aa).

The segment covering 1-10 (MEKKAKESLR) has biased composition (basic and acidic residues). Disordered stretches follow at residues 1–444 (MEKK…EEER), 477–710 (QGRE…PPPL), 833–914 (ASED…MDTN), and 1034–1053 (KEQG…AKIP). Residues 11–20 (RYKKAARHSA) are compositionally biased toward basic residues. A compositionally biased stretch (low complexity) spans 21 to 44 (THSSSSDSTSDSDSGSSSYSSTDS). Residues 47-69 (GVGGVGVGVGVPGGAGGPGGSGS) are compositionally biased toward gly residues. The span at 72 to 97 (GHPHTHGHGHHPRSAERHHRKKKSSR) shows a compositional bias: basic residues. Low complexity predominate over residues 98–107 (RGGSSSGDEP). Composition is skewed to basic residues over residues 110–144 (SRRK…KKRA) and 162–175 (AKLK…RLRA). The stretch at 122–147 (KKLVAKRNHIKRKLKEARLKKRAAAA) forms a coiled coil. Residues 176–199 (ASKEQRERDKLRVVQRDRERDHHR) are compositionally biased toward basic and acidic residues. Residues 202–215 (SSRSPPSSSTTTTT) show a composition bias toward low complexity. A coiled-coil region spans residues 269 to 347 (PSLERERERE…KLRRQEEEEG (79 aa)). Basic and acidic residues-rich tracts occupy residues 270-414 (SLER…DEMR), 428-444 (YAPR…EEER), and 492-529 (PDER…PEWE). A compositionally biased stretch (gly residues) spans 537-558 (AGGGPGGPSGTPGRPGGFVGGP). Basic and acidic residues-rich tracts occupy residues 589 to 611 (ERER…DRPD) and 630 to 640 (WLEHDQREKPR). The span at 660–669 (PPAPSHPHPA) shows a compositional bias: pro residues. Basic and acidic residues predominate over residues 693 to 702 (GHGDHGERPG). The span at 851-861 (QSLNLNQSLSS) shows a compositional bias: low complexity. The span at 879 to 889 (ELSEISDSDDD) shows a compositional bias: acidic residues. The span at 890-903 (ILNKTDKVRPKNEL) shows a compositional bias: basic and acidic residues. The span at 905-914 (TETEQEMDTN) shows a compositional bias: acidic residues.

Belongs to the ZC3H13 family. As to quaternary structure, component of the WMM complex, a N6-methyltransferase complex composed of a catalytic subcomplex, named MAC, and of an associated subcomplex, named MACOM. The MAC subcomplex is composed of Ime4/Mettl3 and Mettl14. The MACOM subcomplex is composed of fl(2)d, Flacc/Xio, Hakai, vir, and, in some cases of nito. Widely expressed during embryogenesis but shows enrichment in the neuroectoderm.

The protein resides in the nucleus. In terms of biological role, associated component of the WMM complex, a complex that mediates N6-methyladenosine (m6A) methylation of mRNAs, a modification that plays a role in the efficiency of mRNA splicing and is required for sex determination. In the WMM complex, acts as a key regulator of m6A methylation by bridging fl(2)d to the RNA-binding component nito. Required for sex determination and dosage compensation via Sxl alternative splicing: m6A methylation acts as a key regulator of Sxl pre-mRNA and promotes female-specific alternative splicing of Sxl, which determines female physiognomy. This Drosophila melanogaster (Fruit fly) protein is Fl(2)d-associated complex component.